A 188-amino-acid polypeptide reads, in one-letter code: Josephin-2 (188 aa).

The region spanning 11 to 188 (PPSVYHERQR…EEAGCWLNTS (178 aa)) is the Josephin domain. Catalysis depends on C24, which acts as the Nucleophile. The active-site Proton acceptor is H125.

Its subcellular location is the cytoplasm. It is found in the cytosol. The catalysed reaction is Thiol-dependent hydrolysis of ester, thioester, amide, peptide and isopeptide bonds formed by the C-terminal Gly of ubiquitin (a 76-residue protein attached to proteins as an intracellular targeting signal).. Its function is as follows. Cleaves 'Lys-63'-linked poly-ubiquitin chains, and with lesser efficiency 'Lys-48'-linked poly-ubiquitin chains (in vitro). May act as a deubiquitinating enzyme. The chain is Josephin-2 (Josd2) from Mus musculus (Mouse).